We begin with the raw amino-acid sequence, 254 residues long: Imidazole glycerol phosphate synthase subunit HisF (254 aa).

Active-site residues include Asp11 and Asp130.

Belongs to the HisA/HisF family. Heterodimer of HisH and HisF.

The protein localises to the cytoplasm. The enzyme catalyses 5-[(5-phospho-1-deoxy-D-ribulos-1-ylimino)methylamino]-1-(5-phospho-beta-D-ribosyl)imidazole-4-carboxamide + L-glutamine = D-erythro-1-(imidazol-4-yl)glycerol 3-phosphate + 5-amino-1-(5-phospho-beta-D-ribosyl)imidazole-4-carboxamide + L-glutamate + H(+). Its pathway is amino-acid biosynthesis; L-histidine biosynthesis; L-histidine from 5-phospho-alpha-D-ribose 1-diphosphate: step 5/9. IGPS catalyzes the conversion of PRFAR and glutamine to IGP, AICAR and glutamate. The HisF subunit catalyzes the cyclization activity that produces IGP and AICAR from PRFAR using the ammonia provided by the HisH subunit. The sequence is that of Imidazole glycerol phosphate synthase subunit HisF from Chromobacterium violaceum (strain ATCC 12472 / DSM 30191 / JCM 1249 / CCUG 213 / NBRC 12614 / NCIMB 9131 / NCTC 9757 / MK).